A 234-amino-acid polypeptide reads, in one-letter code: Methylamine utilization ferredoxin-type protein MauM (234 aa).

4Fe-4S ferredoxin-type domains are found at residues 61–91 (ALAE…LASW), 98–131 (GTPF…PLLT), 140–176 (VAVL…LKPI), and 184–215 (QIPT…VLPR). Cys71, Cys74, Cys77, Cys81, Cys109, Cys112, Cys117, Cys121, Cys149, Cys157, Cys160, Cys164, Cys193, Cys196, Cys199, and Cys203 together coordinate [4Fe-4S] cluster.

It participates in one-carbon metabolism; methylamine degradation. Involved in electron transfer. The chain is Methylamine utilization ferredoxin-type protein MauM (mauM) from Methylobacillus flagellatus (strain ATCC 51484 / DSM 6875 / VKM B-1610 / KT).